The following is a 335-amino-acid chain: 3-ketodihydrosphingosine reductase TSC10 (335 aa).

NADPH contacts are provided by Gly42, Ser44, Ser45, and Gly46. The GXSXG motif lies at 42 to 46 (GGSSG). Position 47 (Leu47) interacts with NADP(+). The NADPH site is built by Arg67, Asp68, Lys71, Asp95, and Leu96. Asp95 serves as a coordination point for NADP(+). NADP(+) contacts are provided by Tyr190, Lys194, and Ile223. Catalysis depends on Tyr190, which acts as the Proton acceptor. Residue Lys194 is the Lowers pKa of active site Tyr of the active site. A helical transmembrane segment spans residues 288–308 (TNNFLLDTLWLIVSSVGVPIW).

This sequence belongs to the short-chain dehydrogenases/reductases (SDR) family.

It is found in the endoplasmic reticulum membrane. The enzyme catalyses sphinganine + NADP(+) = 3-oxosphinganine + NADPH + H(+). It participates in lipid metabolism; sphingolipid metabolism. Functionally, catalyzes the reduction of 3'-oxosphinganine (3-ketodihydrosphingosine/KDS) to sphinganine (dihydrosphingosine/DHS), the second step of de novo sphingolipid biosynthesis. This Cryptococcus neoformans var. neoformans serotype D (strain B-3501A) (Filobasidiella neoformans) protein is 3-ketodihydrosphingosine reductase TSC10 (TSC10).